A 181-amino-acid polypeptide reads, in one-letter code: Ribulose bisphosphate carboxylase small subunit, chloroplastic (181 aa).

The N-terminal 56 residues, 1–56, are a transit peptide targeting the chloroplast; the sequence is MASISSSAIATVNRTTSTQASLAAPFTGLKSNVAFPVTKKANNDFSSLPSNGGRVQ.

This sequence belongs to the RuBisCO small chain family. As to quaternary structure, heterohexadecamer of 8 large and 8 small subunits.

Its subcellular location is the plastid. The protein localises to the chloroplast. In terms of biological role, ruBisCO catalyzes two reactions: the carboxylation of D-ribulose 1,5-bisphosphate, the primary event in carbon dioxide fixation, as well as the oxidative fragmentation of the pentose substrate. Both reactions occur simultaneously and in competition at the same active site. Although the small subunit is not catalytic it is essential for maximal activity. In Lactuca sativa (Garden lettuce), this protein is Ribulose bisphosphate carboxylase small subunit, chloroplastic.